The sequence spans 296 residues: Homoserine kinase (296 aa).

Residue 86–96 (KAGSGLGSSAA) participates in ATP binding.

This sequence belongs to the GHMP kinase family. Homoserine kinase subfamily.

The protein resides in the cytoplasm. The catalysed reaction is L-homoserine + ATP = O-phospho-L-homoserine + ADP + H(+). Its pathway is amino-acid biosynthesis; L-threonine biosynthesis; L-threonine from L-aspartate: step 4/5. Its function is as follows. Catalyzes the ATP-dependent phosphorylation of L-homoserine to L-homoserine phosphate. The chain is Homoserine kinase (thrB) from Methanocaldococcus jannaschii (strain ATCC 43067 / DSM 2661 / JAL-1 / JCM 10045 / NBRC 100440) (Methanococcus jannaschii).